The following is a 41-amino-acid chain: Ornatin-A2 (41 aa).

The Cell attachment site signature appears at 33–35 (RGD).

It belongs to the ornatin family.

The protein localises to the secreted. Functionally, potent inhibitor of fibrinogen interaction with platelet receptors expressed on glycoprotein IIb-IIIa complex. May prevent blood from clotting during either feeding and/or storage of ingested blood. This chain is Ornatin-A2, found in Placobdella ornata (Turtle leech).